The chain runs to 971 residues: Isoleucine--tRNA ligase (971 aa).

The short motif at 64 to 74 (PYANGHIHIGH) is the 'HIGH' region element. Glutamate 602 is a binding site for L-isoleucyl-5'-AMP. The 'KMSKS' region signature appears at 643–647 (KMSKS). Lysine 646 contacts ATP.

This sequence belongs to the class-I aminoacyl-tRNA synthetase family. IleS type 1 subfamily. In terms of assembly, monomer.

It is found in the cytoplasm. It carries out the reaction tRNA(Ile) + L-isoleucine + ATP = L-isoleucyl-tRNA(Ile) + AMP + diphosphate. In terms of biological role, catalyzes the attachment of isoleucine to tRNA(Ile). As IleRS can inadvertently accommodate and process structurally similar amino acids such as valine, to avoid such errors it has two additional distinct tRNA(Ile)-dependent editing activities. One activity is designated as 'pretransfer' editing and involves the hydrolysis of activated Val-AMP. The other activity is designated 'posttransfer' editing and involves deacylation of mischarged Val-tRNA(Ile). The sequence is that of Isoleucine--tRNA ligase from Bartonella henselae (strain ATCC 49882 / DSM 28221 / CCUG 30454 / Houston 1) (Rochalimaea henselae).